Reading from the N-terminus, the 497-residue chain is Cysteine desulfurase, mitochondrial (497 aa).

A mitochondrion-targeting transit peptide spans 1 to 33 (MLKSTATRSITRLSQVYNVPAATYRACLVSRRF). Pyridoxal 5'-phosphate contacts are provided by residues 168–169 (AT), asparagine 248, glutamine 276, and 296–298 (SSH). Residue lysine 299 is modified to N6-(pyridoxal phosphate)lysine. Threonine 336 is a pyridoxal 5'-phosphate binding site. The Cysteine persulfide intermediate role is filled by cysteine 421. Cysteine 421 contacts [2Fe-2S] cluster.

Belongs to the class-V pyridoxal-phosphate-dependent aminotransferase family. NifS/IscS subfamily. Pyridoxal 5'-phosphate serves as cofactor.

The protein localises to the mitochondrion. It carries out the reaction (sulfur carrier)-H + L-cysteine = (sulfur carrier)-SH + L-alanine. Catalyzes the removal of elemental sulfur from cysteine to produce alanine. It supplies the inorganic sulfur for iron-sulfur (Fe-S) clusters. Plays a role in both tRNA-processing and mitochondrial metabolism. Involved in the 2-thio-modification of both 5-carboxymethylaminomethyl-2-thiouridine in mitochondrial tRNAs and 5-methoxycarbonylmethyl-2-thiouridine (mcm5s2U) in cytoplasmic tRNAs. The chain is Cysteine desulfurase, mitochondrial from Saccharomyces cerevisiae (strain ATCC 204508 / S288c) (Baker's yeast).